The chain runs to 739 residues: Poly(A) polymerase gamma (739 aa).

The residue at position 2 (Lys2) is an N6-acetyllysine. Ser23 is subject to Phosphoserine. Residues 99–101 (FGS), Thr108, 112–114 (DID), Asp166, Lys227, Tyr236, and 245–246 (GV) each bind ATP. The Mg(2+) site is built by Asp112, Asp114, and Asp166. Positions 506-566 (KSLSDVSRSS…PTGEIERSSA (61 aa)) are disordered. 2 stretches are compositionally biased toward polar residues: residues 509–531 (SDVSRSSGGLQSKRSSLDSTCLD) and 538–556 (SGTPFNSPVSANKPSNPDS). Ser524 bears the Phosphoserine mark. Phosphoserine occurs at positions 602 and 651. Thr657 bears the Phosphothreonine mark. Residues 677-688 (SRAAEDRKRKPM) are compositionally biased toward basic and acidic residues. Positions 677–725 (SRAAEDRKRKPMDSIGGESMPIPTIDTARKKRLPSKELPDSSSPVPANN) are disordered. The residue at position 711 (Ser711) is a Phosphoserine.

The protein belongs to the poly(A) polymerase family. Requires Mg(2+) as cofactor. It depends on Mn(2+) as a cofactor.

The protein localises to the nucleus. The enzyme catalyses RNA(n) + ATP = RNA(n)-3'-adenine ribonucleotide + diphosphate. In terms of biological role, responsible for the post-transcriptional adenylation of the 3'-terminal of mRNA precursors and several small RNAs including signal recognition particle (SRP) RNA, nuclear 7SK RNA, U2 small nuclear RNA, and ribosomal 5S RNA. This chain is Poly(A) polymerase gamma (Papolg), found in Mus musculus (Mouse).